We begin with the raw amino-acid sequence, 71 residues long: UPF0337 protein PPA1427 (71 aa).

Residues 20–46 (EKIGGLTDDSDLKSAGADQKASGKVAQ) are disordered.

The protein belongs to the UPF0337 (CsbD) family.

In Cutibacterium acnes (strain DSM 16379 / KPA171202) (Propionibacterium acnes), this protein is UPF0337 protein PPA1427.